A 468-amino-acid polypeptide reads, in one-letter code: MDYLPIFCRLDNKPVLLVGGGEVAERKARLLLDAGARLTVVSPALDPELAALATSGTIDWLAAEFEPAHLTGKWLVVAATDRREVNALVYQSANQAGIFANVVDDPKRSSFIMPSIIDRSPLMVAISSGGKAPVLARLLREKLEALLPQHLGAVAAFAGGLRARVKARFASMGERRQFWERLLSADRLGQALARGDKASANQLADTLFAEETGAKGEVILVGAGPGDPGLLTLHALRHMQQADLVVYDQLVSDEVMALVRRDARRIFVGKQAGNHCVPQEGINQLLLEEASKGQRVVRLKGGDPFIFGRGGEELETLVGSGVGFQVVPGITAASGCAAYAGIPLTHRDHAQSVRFVTAHGKGGTQDLDWPLLARDQQTLVFYMGLSSCATIRQKLTAHGKAGTTPVALIERGTQLNQRVIRGTLDQLPELAVGVESPALIMVGSVVTLADKLAWFGQTNHGVQAAALA.

Residues 1–204 (MDYLPIFCRL…GDKASANQLA (204 aa)) form a precorrin-2 dehydrogenase /sirohydrochlorin ferrochelatase region. Residues 22–23 (EV) and 43–44 (PA) each bind NAD(+). Serine 128 is modified (phosphoserine). The interval 216–468 (GEVILVGAGP…NHGVQAAALA (253 aa)) is uroporphyrinogen-III C-methyltransferase. Position 225 (proline 225) interacts with S-adenosyl-L-methionine. Catalysis depends on aspartate 248, which acts as the Proton acceptor. Catalysis depends on lysine 270, which acts as the Proton donor. S-adenosyl-L-methionine-binding positions include 301 to 303 (GGD), isoleucine 306, 331 to 332 (TA), methionine 383, and glycine 412.

This sequence in the N-terminal section; belongs to the precorrin-2 dehydrogenase / sirohydrochlorin ferrochelatase family. It in the C-terminal section; belongs to the precorrin methyltransferase family.

The catalysed reaction is uroporphyrinogen III + 2 S-adenosyl-L-methionine = precorrin-2 + 2 S-adenosyl-L-homocysteine + H(+). The enzyme catalyses precorrin-2 + NAD(+) = sirohydrochlorin + NADH + 2 H(+). It carries out the reaction siroheme + 2 H(+) = sirohydrochlorin + Fe(2+). The protein operates within cofactor biosynthesis; adenosylcobalamin biosynthesis; precorrin-2 from uroporphyrinogen III: step 1/1. It participates in cofactor biosynthesis; adenosylcobalamin biosynthesis; sirohydrochlorin from precorrin-2: step 1/1. It functions in the pathway porphyrin-containing compound metabolism; siroheme biosynthesis; precorrin-2 from uroporphyrinogen III: step 1/1. Its pathway is porphyrin-containing compound metabolism; siroheme biosynthesis; siroheme from sirohydrochlorin: step 1/1. The protein operates within porphyrin-containing compound metabolism; siroheme biosynthesis; sirohydrochlorin from precorrin-2: step 1/1. In terms of biological role, multifunctional enzyme that catalyzes the SAM-dependent methylations of uroporphyrinogen III at position C-2 and C-7 to form precorrin-2 via precorrin-1. Then it catalyzes the NAD-dependent ring dehydrogenation of precorrin-2 to yield sirohydrochlorin. Finally, it catalyzes the ferrochelation of sirohydrochlorin to yield siroheme. In Aeromonas salmonicida (strain A449), this protein is Siroheme synthase 1.